The following is a 410-amino-acid chain: Testis-specific Y-encoded-like protein 6 (410 aa).

2 disordered regions span residues 1 to 31 (MSLPESPHSPATLDYALEDPHQGQRSREKSK) and 46 to 69 (PIVFPPPRLPEEGVAPQDPADGGH). Ser9 carries the post-translational modification Phosphoserine. The span at 18-31 (EDPHQGQRSREKSK) shows a compositional bias: basic and acidic residues.

This sequence belongs to the nucleosome assembly protein (NAP) family.

The sequence is that of Testis-specific Y-encoded-like protein 6 (TSPYL6) from Homo sapiens (Human).